The sequence spans 208 residues: uncharacterized protein (208 aa).

4Fe-4S ferredoxin-type domains lie at 59–88 (GVLV…SVGT), 114–145 (GDLN…WQQK), 147–176 (GCIT…VNTE), and 174–203 (NTES…IIEW). [4Fe-4S] cluster-binding residues include Cys-68, Cys-71, Cys-74, Cys-78, Cys-123, Cys-126, Cys-131, Cys-135, Cys-156, Cys-159, Cys-162, Cys-166, Cys-183, Cys-186, Cys-189, and Cys-193.

This is an uncharacterized protein from Escherichia coli O157:H7.